Reading from the N-terminus, the 1155-residue chain is Protein BREAST CANCER SUSCEPTIBILITY 2 homolog B (1155 aa).

4 BRCA2 repeats span residues 63-97 (MPGE…ENVA), 116-150 (TAET…SDMI), 163-197 (FGVP…LEED), and 257-291 (LKVP…DPEL).

As to quaternary structure, interacts with RAD51 and DMC1. Interacts with DSS1(I) and DSS1(V). Can interact with both RAD51 and DSS1(I) or both DMC1 and DSS1(I) in a tripartite complex. As to expression, expressed in flower buds.

Its function is as follows. Involved in double-strand break repair and/or homologous recombination by mediating RAD51- and DMC1-facilitated DNA repair. Plays an essential role in both somatic and meiotic homologous recombination. Is crucial for the formation of RAD51 and DMC1 foci during male meiotic homologous recombination in prophase I. The polypeptide is Protein BREAST CANCER SUSCEPTIBILITY 2 homolog B (Arabidopsis thaliana (Mouse-ear cress)).